The chain runs to 196 residues: uncharacterized protein (196 aa).

Residues 1–21 (MQPEVEPLISPNLGAPGSHRE) are disordered.

This is an uncharacterized protein from Mus musculus (Mouse).